A 316-amino-acid polypeptide reads, in one-letter code: Methionyl-tRNA formyltransferase (316 aa).

110 to 113 (SLLP) contributes to the (6S)-5,6,7,8-tetrahydrofolate binding site.

Belongs to the Fmt family.

The enzyme catalyses L-methionyl-tRNA(fMet) + (6R)-10-formyltetrahydrofolate = N-formyl-L-methionyl-tRNA(fMet) + (6S)-5,6,7,8-tetrahydrofolate + H(+). In terms of biological role, attaches a formyl group to the free amino group of methionyl-tRNA(fMet). The formyl group appears to play a dual role in the initiator identity of N-formylmethionyl-tRNA by promoting its recognition by IF2 and preventing the misappropriation of this tRNA by the elongation apparatus. This is Methionyl-tRNA formyltransferase from Halothermothrix orenii (strain H 168 / OCM 544 / DSM 9562).